Consider the following 516-residue polypeptide: Putative thymidine phosphorylase (516 aa).

It belongs to the thymidine/pyrimidine-nucleoside phosphorylase family. Type 2 subfamily.

The catalysed reaction is thymidine + phosphate = 2-deoxy-alpha-D-ribose 1-phosphate + thymine. This is Putative thymidine phosphorylase from Methylococcus capsulatus (strain ATCC 33009 / NCIMB 11132 / Bath).